Reading from the N-terminus, the 250-residue chain is 5-oxoprolinase subunit A (250 aa).

This sequence belongs to the LamB/PxpA family. As to quaternary structure, forms a complex composed of PxpA, PxpB and PxpC.

The catalysed reaction is 5-oxo-L-proline + ATP + 2 H2O = L-glutamate + ADP + phosphate + H(+). Functionally, catalyzes the cleavage of 5-oxoproline to form L-glutamate coupled to the hydrolysis of ATP to ADP and inorganic phosphate. The chain is 5-oxoprolinase subunit A from Staphylococcus aureus (strain MRSA252).